We begin with the raw amino-acid sequence, 189 residues long: Casparian strip membrane protein 1 (189 aa).

At 1 to 25 the chain is on the cytoplasmic side; sequence MMQAESGSAEAKGPLPPPVGRKRRG. The chain crosses the membrane as a helical span at residues 26–46; sequence LGILDFLLRLLAIGATLSAAI. Residues 47–73 are Extracellular-facing; sequence TMGTTNETLQFFTQFFQFKARFYDLSA. N52 carries N-linked (GlcNAc...) asparagine glycosylation. Residues 74–94 form a helical membrane-spanning segment; the sequence is FIYFVIANAIVGGYLLLSLPI. Topologically, residues 95–108 are cytoplasmic; sequence SILNIVRPRAASSR. Residues 109-129 form a helical membrane-spanning segment; the sequence is VFLIFFDTVMVAVCTSGAAAA. Residues 130-158 lie on the Extracellular side of the membrane; the sequence is VAILYVARKGNSRTNWFAICQRFNSFCNQ. The chain crosses the membrane as a helical span at residues 159–179; that stretch reads AIGAVSASFAGVVFLILLVLL. Over 180–189 the chain is Cytoplasmic; that stretch reads SASTLYRRRP.

This sequence belongs to the Casparian strip membrane proteins (CASP) family. As to quaternary structure, homodimer and heterodimers.

Its subcellular location is the cell membrane. Functionally, regulates membrane-cell wall junctions and localized cell wall deposition. Required for establishment of the Casparian strip membrane domain (CSD) and the subsequent formation of Casparian strips, a cell wall modification of the root endodermis that determines an apoplastic barrier between the intraorganismal apoplasm and the extraorganismal apoplasm and prevents lateral diffusion. This chain is Casparian strip membrane protein 1, found in Picea glauca (White spruce).